Reading from the N-terminus, the 686-residue chain is Potassium-transporting ATPase ATP-binding subunit (686 aa).

The next 2 membrane-spanning stretches (helical) occupy residues Val38–Val58 and Ala64–Ala84. Residues Ala101–Pro123 form a disordered region. Residues Lys107–Pro123 show a composition bias toward basic and acidic residues. Helical transmembrane passes span Ile224–Ala244 and Val257–Ile277. Asp308 functions as the 4-aspartylphosphate intermediate in the catalytic mechanism. ATP-binding positions include Asp345, Glu349, Phe378 to Ser385, and Lys399. Mg(2+) is bound by residues Asp522 and Asp526. The next 3 helical transmembrane spans lie at Phe592–Met612, Ala620–Leu640, and Val666–Ala686.

It belongs to the cation transport ATPase (P-type) (TC 3.A.3) family. Type IA subfamily. The system is composed of three essential subunits: KdpA, KdpB and KdpC.

Its subcellular location is the cell membrane. It carries out the reaction K(+)(out) + ATP + H2O = K(+)(in) + ADP + phosphate + H(+). In terms of biological role, part of the high-affinity ATP-driven potassium transport (or Kdp) system, which catalyzes the hydrolysis of ATP coupled with the electrogenic transport of potassium into the cytoplasm. This subunit is responsible for energy coupling to the transport system and for the release of the potassium ions to the cytoplasm. This chain is Potassium-transporting ATPase ATP-binding subunit, found in Myxococcus xanthus.